A 319-amino-acid polypeptide reads, in one-letter code: Beta-ketoacyl-[acyl-carrier-protein] synthase III (319 aa).

Residues Cys113 and His246 contribute to the active site. Residues 247–251 are ACP-binding; that stretch reads QANRR. Residue Asn276 is part of the active site.

The protein belongs to the thiolase-like superfamily. FabH family. Homodimer.

It localises to the cytoplasm. It catalyses the reaction malonyl-[ACP] + acetyl-CoA + H(+) = 3-oxobutanoyl-[ACP] + CO2 + CoA. Its pathway is lipid metabolism; fatty acid biosynthesis. In terms of biological role, catalyzes the condensation reaction of fatty acid synthesis by the addition to an acyl acceptor of two carbons from malonyl-ACP. Catalyzes the first condensation reaction which initiates fatty acid synthesis and may therefore play a role in governing the total rate of fatty acid production. Possesses both acetoacetyl-ACP synthase and acetyl transacylase activities. Its substrate specificity determines the biosynthesis of branched-chain and/or straight-chain of fatty acids. This chain is Beta-ketoacyl-[acyl-carrier-protein] synthase III, found in Rhizorhabdus wittichii (strain DSM 6014 / CCUG 31198 / JCM 15750 / NBRC 105917 / EY 4224 / RW1) (Sphingomonas wittichii).